We begin with the raw amino-acid sequence, 344 residues long: Holliday junction branch migration complex subunit RuvB (344 aa).

The large ATPase domain (RuvB-L) stretch occupies residues 1-182 (MSDRLISATA…FGIISRLEFY (182 aa)). ATP is bound by residues leucine 21, arginine 22, glycine 63, lysine 66, threonine 67, threonine 68, 129-131 (EDF), arginine 172, tyrosine 182, and arginine 219. Threonine 67 is a Mg(2+) binding site. Residues 183–253 (NNEDLTRIVT…VAAEALEFFE (71 aa)) form a small ATPAse domain (RuvB-S) region. A head domain (RuvB-H) region spans residues 256–344 (PLGLDHTDRR…QKGLEQNSLF (89 aa)). DNA-binding residues include arginine 311 and arginine 316.

Belongs to the RuvB family. As to quaternary structure, homohexamer. Forms an RuvA(8)-RuvB(12)-Holliday junction (HJ) complex. HJ DNA is sandwiched between 2 RuvA tetramers; dsDNA enters through RuvA and exits via RuvB. An RuvB hexamer assembles on each DNA strand where it exits the tetramer. Each RuvB hexamer is contacted by two RuvA subunits (via domain III) on 2 adjacent RuvB subunits; this complex drives branch migration. In the full resolvosome a probable DNA-RuvA(4)-RuvB(12)-RuvC(2) complex forms which resolves the HJ.

It is found in the cytoplasm. The enzyme catalyses ATP + H2O = ADP + phosphate + H(+). The RuvA-RuvB-RuvC complex processes Holliday junction (HJ) DNA during genetic recombination and DNA repair, while the RuvA-RuvB complex plays an important role in the rescue of blocked DNA replication forks via replication fork reversal (RFR). RuvA specifically binds to HJ cruciform DNA, conferring on it an open structure. The RuvB hexamer acts as an ATP-dependent pump, pulling dsDNA into and through the RuvAB complex. RuvB forms 2 homohexamers on either side of HJ DNA bound by 1 or 2 RuvA tetramers; 4 subunits per hexamer contact DNA at a time. Coordinated motions by a converter formed by DNA-disengaged RuvB subunits stimulates ATP hydrolysis and nucleotide exchange. Immobilization of the converter enables RuvB to convert the ATP-contained energy into a lever motion, pulling 2 nucleotides of DNA out of the RuvA tetramer per ATP hydrolyzed, thus driving DNA branch migration. The RuvB motors rotate together with the DNA substrate, which together with the progressing nucleotide cycle form the mechanistic basis for DNA recombination by continuous HJ branch migration. Branch migration allows RuvC to scan DNA until it finds its consensus sequence, where it cleaves and resolves cruciform DNA. This chain is Holliday junction branch migration complex subunit RuvB, found in Desulforamulus reducens (strain ATCC BAA-1160 / DSM 100696 / MI-1) (Desulfotomaculum reducens).